The chain runs to 339 residues: D-erythrose-4-phosphate dehydrogenase (339 aa).

Residues 12–13 (RI) and Arg81 contribute to the NAD(+) site. Substrate contacts are provided by residues 154–156 (SCT), Arg200, 213–214 (TK), and Arg236. The Nucleophile role is filled by Cys155. Residue Asn318 coordinates NAD(+).

This sequence belongs to the glyceraldehyde-3-phosphate dehydrogenase family. Epd subfamily. As to quaternary structure, homotetramer.

It is found in the cytoplasm. It carries out the reaction D-erythrose 4-phosphate + NAD(+) + H2O = 4-phospho-D-erythronate + NADH + 2 H(+). The protein operates within cofactor biosynthesis; pyridoxine 5'-phosphate biosynthesis; pyridoxine 5'-phosphate from D-erythrose 4-phosphate: step 1/5. In terms of biological role, catalyzes the NAD-dependent conversion of D-erythrose 4-phosphate to 4-phosphoerythronate. This chain is D-erythrose-4-phosphate dehydrogenase, found in Escherichia fergusonii (strain ATCC 35469 / DSM 13698 / CCUG 18766 / IAM 14443 / JCM 21226 / LMG 7866 / NBRC 102419 / NCTC 12128 / CDC 0568-73).